We begin with the raw amino-acid sequence, 79 residues long: Defensin-like protein 3 (79 aa).

A signal peptide spans 1–29 (MAKFASIVALLFAALVVFAAFEAPTVVEA). Cystine bridges form between cysteine 32–cysteine 79, cysteine 43–cysteine 64, cysteine 49–cysteine 73, and cysteine 53–cysteine 75.

It belongs to the DEFL family.

The protein resides in the secreted. Functionally, possesses antifungal activity sensitive to inorganic cations. This chain is Defensin-like protein 3 (AFP3), found in Raphanus sativus (Radish).